Consider the following 518-residue polypeptide: Pumilio homolog 14 (518 aa).

Disordered regions lie at residues 26–46 (TMAS…QPEN) and 77–114 (VGQN…PPMG). A compositionally biased stretch (low complexity) spans 29-44 (SSSSQPQPISSPFHQP). One can recognise a PUM-HD domain in the interval 178-518 (YTNRFGYEGY…GNKVLEKLNI (341 aa)). One copy of the Pumilio 1; degenerate repeat lies at 206 to 235 (SAFAKDKEMSERLGMSIFQGTKETVDAIYN). Pumilio repeat units follow at residues 236 to 271 (GLIG…QLVD), 275 to 313 (QQMF…RIVD), 314 to 348 (VVRT…LLLE), 349 to 387 (LIVQ…RLIM), 388 to 423 (EAIA…ALVR), 424 to 459 (QLIG…IVID), and 460 to 494 (LLRE…MLRY).

The protein localises to the cytoplasm. Its subcellular location is the nucleus. Sequence-specific RNA-binding protein that regulates translation and mRNA stability by binding the 3'-UTR of target mRNAs. The protein is Pumilio homolog 14 (APUM14) of Arabidopsis thaliana (Mouse-ear cress).